We begin with the raw amino-acid sequence, 156 residues long: Small ribosomal subunit protein uS7 (156 aa).

Belongs to the universal ribosomal protein uS7 family. In terms of assembly, part of the 30S ribosomal subunit. Contacts proteins S9 and S11.

In terms of biological role, one of the primary rRNA binding proteins, it binds directly to 16S rRNA where it nucleates assembly of the head domain of the 30S subunit. Is located at the subunit interface close to the decoding center, probably blocks exit of the E-site tRNA. The polypeptide is Small ribosomal subunit protein uS7 (Thiomonas delicata (Thiomonas cuprina)).